We begin with the raw amino-acid sequence, 302 residues long: CASP-like protein 4A2 (302 aa).

Residues 1–13 (MALQAQQQATPSP) are compositionally biased toward polar residues. Residues 1-134 (MALQAQQQAT…APPPHAQVRS (134 aa)) are disordered. Residues 1–154 (MALQAQQQAT…RKRRAAVMQR (154 aa)) lie on the Cytoplasmic side of the membrane. Low complexity predominate over residues 40 to 60 (VVVASTHHAAAAARYVPPRAT). Residues 99–129 (KTPPPAPPLPAAPPPPPAASPAPAPRAPPPH) show a composition bias toward pro residues. The helical transmembrane segment at 155-175 (AALLARAAAAGLCLAALAVLA) threads the bilayer. The Extracellular segment spans residues 176–197 (SDTRRGWARDSYSNYAQFRYSE). The chain crosses the membrane as a helical span at residues 198 to 218 (AVNVVGFLYSVFQFVALAELM). Residues 219-238 (RRNKHLIPHPKRDLFDFTMD) are Cytoplasmic-facing. The helical transmembrane segment at 239–256 (QVVAYLLISSSSSATARA) threads the bilayer. Over 257–273 (SDLIENWGSDSFPSMAN) the chain is Extracellular. A helical transmembrane segment spans residues 274–294 (GSIAISFVAFVVFAICSLISA). The Cytoplasmic portion of the chain corresponds to 295–302 (YNLFRRDM).

It belongs to the Casparian strip membrane proteins (CASP) family. As to quaternary structure, homodimer and heterodimers.

It localises to the cell membrane. The sequence is that of CASP-like protein 4A2 from Zea mays (Maize).